Here is a 141-residue protein sequence, read N- to C-terminus: Large ribosomal subunit protein uL11 (141 aa).

This sequence belongs to the universal ribosomal protein uL11 family. As to quaternary structure, part of the ribosomal stalk of the 50S ribosomal subunit. Interacts with L10 and the large rRNA to form the base of the stalk. L10 forms an elongated spine to which L12 dimers bind in a sequential fashion forming a multimeric L10(L12)X complex. In terms of processing, one or more lysine residues are methylated.

Its function is as follows. Forms part of the ribosomal stalk which helps the ribosome interact with GTP-bound translation factors. The sequence is that of Large ribosomal subunit protein uL11 from Nostoc sp. (strain PCC 7120 / SAG 25.82 / UTEX 2576).